Here is a 453-residue protein sequence, read N- to C-terminus: Ribosomal protein uS12 methylthiotransferase RimO (453 aa).

The 111-residue stretch at 6 to 116 (PKVGFVSLGC…VMEAVHEALP (111 aa)) folds into the MTTase N-terminal domain. Residues Cys-15, Cys-51, Cys-80, Cys-147, Cys-151, and Cys-154 each coordinate [4Fe-4S] cluster. One can recognise a Radical SAM core domain in the interval 133–370 (LTPRHYAYLK…MEKQAQISAA (238 aa)). Residues 373–441 (EAKIGTVQQC…EHDLYGDALP (69 aa)) form the TRAM domain.

It belongs to the methylthiotransferase family. RimO subfamily. The cofactor is [4Fe-4S] cluster.

Its subcellular location is the cytoplasm. It carries out the reaction L-aspartate(89)-[ribosomal protein uS12]-hydrogen + (sulfur carrier)-SH + AH2 + 2 S-adenosyl-L-methionine = 3-methylsulfanyl-L-aspartate(89)-[ribosomal protein uS12]-hydrogen + (sulfur carrier)-H + 5'-deoxyadenosine + L-methionine + A + S-adenosyl-L-homocysteine + 2 H(+). Functionally, catalyzes the methylthiolation of an aspartic acid residue of ribosomal protein uS12. The polypeptide is Ribosomal protein uS12 methylthiotransferase RimO (Stenotrophomonas maltophilia (strain K279a)).